The sequence spans 39 residues: Cytochrome b559 subunit beta (39 aa).

A helical transmembrane segment spans residues 14–30; it reads WLAIHGLAVPTVFFLGS. A heme-binding site is contributed by His18.

Belongs to the PsbE/PsbF family. In terms of assembly, heterodimer of an alpha subunit and a beta subunit. PSII is composed of 1 copy each of membrane proteins PsbA, PsbB, PsbC, PsbD, PsbE, PsbF, PsbH, PsbI, PsbJ, PsbK, PsbL, PsbM, PsbT, PsbX, PsbY, PsbZ, Psb30/Ycf12, at least 3 peripheral proteins of the oxygen-evolving complex and a large number of cofactors. It forms dimeric complexes. It depends on heme b as a cofactor.

It is found in the plastid. The protein localises to the chloroplast thylakoid membrane. Its function is as follows. This b-type cytochrome is tightly associated with the reaction center of photosystem II (PSII). PSII is a light-driven water:plastoquinone oxidoreductase that uses light energy to abstract electrons from H(2)O, generating O(2) and a proton gradient subsequently used for ATP formation. It consists of a core antenna complex that captures photons, and an electron transfer chain that converts photonic excitation into a charge separation. The protein is Cytochrome b559 subunit beta of Ephedra sinica (Chinese ephedra).